The sequence spans 371 residues: Protein STRICTOSIDINE SYNTHASE-LIKE 6 (371 aa).

The N-terminal stretch at 1–21 (MPVFLSSRFLFFCIIVPLLIS) is a signal peptide. Residues Asn-101 and Asn-137 are each glycosylated (N-linked (GlcNAc...) asparagine). Residue Tyr-303 is modified to Phosphotyrosine.

Belongs to the strictosidine synthase family.

The protein localises to the vacuole. In Arabidopsis thaliana (Mouse-ear cress), this protein is Protein STRICTOSIDINE SYNTHASE-LIKE 6.